A 246-amino-acid chain; its full sequence is Ribonuclease PH (246 aa).

Positions 67-87 (NMLPGSTSPRKRRDRSGKVDG) are disordered. Phosphate-binding positions include Arg88 and 126–128 (GTR).

It belongs to the RNase PH family. In terms of assembly, homohexameric ring arranged as a trimer of dimers.

The enzyme catalyses tRNA(n+1) + phosphate = tRNA(n) + a ribonucleoside 5'-diphosphate. In terms of biological role, phosphorolytic 3'-5' exoribonuclease that plays an important role in tRNA 3'-end maturation. Removes nucleotide residues following the 3'-CCA terminus of tRNAs; can also add nucleotides to the ends of RNA molecules by using nucleoside diphosphates as substrates, but this may not be physiologically important. Probably plays a role in initiation of 16S rRNA degradation (leading to ribosome degradation) during starvation. In Rhodopirellula baltica (strain DSM 10527 / NCIMB 13988 / SH1), this protein is Ribonuclease PH.